We begin with the raw amino-acid sequence, 184 residues long: Protein DESIGUAL 3 (184 aa).

Residues 1–24 form the signal peptide; the sequence is MESELGFLVSVVIICADITATVLG. The segment covering 34-45 has biased composition (basic residues); the sequence is APHHHHQQHSRH. A disordered region spans residues 34–53; that stretch reads APHHHHQQHSRHSGSGCRRS. The next 3 membrane-spanning stretches (helical) occupy residues 62–82, 99–119, and 140–160; these read GVAA…LGGC, ILAV…YSTL, and FFLI…AYYV. Asn-180 is a glycosylation site (N-linked (GlcNAc...) asparagine).

The protein belongs to the DESIGUAL family. Mainly expressed in roots, inflorescences and developing leaves, and, at low levels, in mature leaves.

The protein localises to the endoplasmic reticulum membrane. Functionally, involved, partially redundantly with VCC/DEAL1 and DEAL2, to ensure bilateral symmetry development and early leaf margin patterning, probably via the regulation of auxin and CUC2 distribution. The polypeptide is Protein DESIGUAL 3 (Arabidopsis thaliana (Mouse-ear cress)).